A 286-amino-acid chain; its full sequence is MTTNLPFSSPSKQLNRFSFWQSISIPWVVTIIYLLLILVLPIAALLVKSASLGLEGFWQIATTPIAISTYNVTFITALAAGLVNGVMGTLVAWVLVRCQFPGKKIVDAMVDLPFALPTSVAGLVLATLYSQTGWVGRFFAPFGIQIAFSRLGVFVAMVFISLPFIVRTLQPVLQELEEEAEEAAWSLGATEFQTFWRVIFPPLIPPILTGIALGFSRAVGEYGSVVLIASNIPFKDLIAPVLVFERLEQYDYPAATVIGAVLLSVSLILLLIINLLQQWGRRYAND.

Helical transmembrane passes span 27–47 (WVVT…ALLV), 74–94 (FITA…VAWV), 108–128 (AMVD…LATL), 146–166 (IAFS…PFIV), 195–215 (FWRV…ALGF), 224–244 (SVVL…VLVF), and 257–276 (VIGA…INLL). The ABC transmembrane type-1 domain maps to 70–273 (YNVTFITALA…SVSLILLLII (204 aa)).

It belongs to the binding-protein-dependent transport system permease family. CysTW subfamily. The complex is composed of two ATP-binding proteins (CysA), two transmembrane proteins (CysT and CysW) and a solute-binding protein (CysP).

The protein resides in the cell inner membrane. In terms of biological role, part of the ABC transporter complex CysAWTP (TC 3.A.1.6.1) involved in sulfate/thiosulfate import. Probably responsible for the translocation of the substrate across the membrane. This Synechocystis sp. (strain ATCC 27184 / PCC 6803 / Kazusa) protein is Sulfate transport system permease protein CysT (cysT).